A 160-amino-acid polypeptide reads, in one-letter code: Cytochrome b6-f complex subunit 4 (160 aa).

3 helical membrane-spanning segments follow: residues 36–56 (LLYI…GLAV), 95–115 (LLGV…PFLE), and 131–151 (TVFL…AMPI).

The protein belongs to the cytochrome b family. PetD subfamily. The 4 large subunits of the cytochrome b6-f complex are cytochrome b6, subunit IV (17 kDa polypeptide, petD), cytochrome f and the Rieske protein, while the 4 small subunits are petG, petL, petM and petN. The complex functions as a dimer.

The protein localises to the plastid. It localises to the chloroplast thylakoid membrane. In terms of biological role, component of the cytochrome b6-f complex, which mediates electron transfer between photosystem II (PSII) and photosystem I (PSI), cyclic electron flow around PSI, and state transitions. The protein is Cytochrome b6-f complex subunit 4 of Zygnema circumcarinatum (Green alga).